The following is a 354-amino-acid chain: Peptide chain release factor 1 (354 aa).

The residue at position 232 (Q232) is an N5-methylglutamine.

It belongs to the prokaryotic/mitochondrial release factor family. Post-translationally, methylated by PrmC. Methylation increases the termination efficiency of RF1.

The protein localises to the cytoplasm. In terms of biological role, peptide chain release factor 1 directs the termination of translation in response to the peptide chain termination codons UAG and UAA. The polypeptide is Peptide chain release factor 1 (Jannaschia sp. (strain CCS1)).